The sequence spans 329 residues: Ribosomal RNA small subunit methyltransferase H (329 aa).

Residues 46–48 (GGH), Asp65, Phe92, Asp113, and His120 each bind S-adenosyl-L-methionine. The disordered stretch occupies residues 295–329 (RGAERPSPAEVAANPRAASARLRAAEKIRDTREAA). The segment covering 317–329 (RAAEKIRDTREAA) has biased composition (basic and acidic residues).

This sequence belongs to the methyltransferase superfamily. RsmH family.

It is found in the cytoplasm. The catalysed reaction is cytidine(1402) in 16S rRNA + S-adenosyl-L-methionine = N(4)-methylcytidine(1402) in 16S rRNA + S-adenosyl-L-homocysteine + H(+). In terms of biological role, specifically methylates the N4 position of cytidine in position 1402 (C1402) of 16S rRNA. The sequence is that of Ribosomal RNA small subunit methyltransferase H from Acidothermus cellulolyticus (strain ATCC 43068 / DSM 8971 / 11B).